Consider the following 114-residue polypeptide: MKKKILAFGLISALFCSTPAMADMNRTTKGALLGAGVGLLTGNGVNGVLKGAAVGAGVGAVTEKGRDGKNARKGAKVGAAVGAVTGVLTGNGLEGAIKGAVIGGTGGAILGKMK.

It belongs to the UPF0757 family.

This is UPF0757 protein YmgG from Shigella flexneri.